The following is a 512-amino-acid chain: MGRSMLPEQQEDVSRKSKKEKKSKKDKKRKLEAEAEVVVVEAAAATSTDEATKSSKKKRAKGDLGQGEEAENGGGKVVAVTGKGSADAKYAPLSSFAATALPPQVLDCCKGFERPSPIQAYAWPYLLDGRDFIGIAATGSGKTIAFGVPALMHVRRKMGEKSAKKGVPRVLVLSPTRELAQQIADVLCEAGAPCGISSVCLYGGTSKGPQISALKSGVDIVIGTPGRMKDLIEMGICRLNDVSFVVLDEADRMLDMGFEPEVRAILSQTASVRQTVMFSATWPPAVHQLAQEFMDPNPIKVVIGSEDLAANHDVMQIVEVLDDRSRDSRLVALLDKYHKAQRNRVLVFVLYKREATRVETMLQRRGWSAVSVHGDKAQHDRTKALSLFKEGSCPLMIATDVASRGLDIPDVEVVINYSYPLTTEDYVHRIGRTGRAGKKGVAHTFFTQENKGLAGELVNVLREAGQVVPPALTKFGTHVKKKESQIYGSHFKEIKADAPKSTKITFGDSDED.

2 disordered regions span residues Met1 to Ala33 and Ala45 to Lys76. A coiled-coil region spans residues Ser14–Ala45. Basic residues predominate over residues Lys16–Lys30. The Q motif signature appears at Ser94–Ala120. A Helicase ATP-binding domain is found at Trp123–Lys300. Ala136–Thr143 contributes to the ATP binding site. A DEAD box motif is present at residues Asp248 to Asp251. A Helicase C-terminal domain is found at Leu333–Gly476.

It belongs to the DEAD box helicase family. DDX5/DBP2 subfamily.

It is found in the nucleus. It localises to the nucleolus. The enzyme catalyses ATP + H2O = ADP + phosphate + H(+). Functionally, ATP-dependent RNA helicase required for 60S ribosomal subunit synthesis. Involved in efficient pre-rRNA processing, predominantly at site A3, which is necessary for the normal formation of 25S and 5.8S rRNAs. This chain is DEAD-box ATP-dependent RNA helicase 5, found in Oryza sativa subsp. japonica (Rice).